Consider the following 360-residue polypeptide: MEERERGARSAGAGSPARPPSPRLDVSSDSFDPLLALYAPRLPPIPYPNAPCFNNVAEYESFLRTGVRGGGRGRGRARGAAAGSGVPAAPGPSGRTRRRPDAPAPDPERIQRLRRLMVAKEEGDGAAGAGRRGPGRSRKAPRNVLTRMPLHEGSPLGELHRCIREGVKVNVHIRTFKGLRGVCTGFLVAFDKFWNMALTDVDETYRKPVLGKAYERDSSLTLTRLFDRLKLQDSSKKEADSKSAVEDSTLSRYSQTSTWKLASVWGRADTGRGSHKRSRSVPSSLQASAREESRSELSGRTTRTDGSSVGGTFSRATTLSRGQSRKKKRKPKVDYQQVFTRHINQIFIRGENVLLVHLAQ.

The interval 1–29 (MEERERGARSAGAGSPARPPSPRLDVSSD) is disordered. 2 positions are modified to phosphoserine: Ser-15 and Ser-21. Arg-41 is subject to Omega-N-methylarginine. The segment at 68-143 (RGGGRGRGRA…PGRSRKAPRN (76 aa)) is disordered. Positions 78-94 (RGAAAGSGVPAAPGPSG) are enriched in low complexity. Lys-120 is covalently cross-linked (Glycyl lysine isopeptide (Lys-Gly) (interchain with G-Cter in SUMO2)). Ser-154 carries the phosphoserine modification. In terms of domain architecture, Sm spans 154–229 (SPLGELHRCI…LTLTRLFDRL (76 aa)). The SM 1 stretch occupies residues 171–204 (VHIRTFKGLRGVCTGFLVAFDKFWNMALTDVDET). The segment at 268–333 (ADTGRGSHKR…SRKKKRKPKV (66 aa)) is disordered. Ser-280 is modified (phosphoserine). Residues 299–322 (GRTTRTDGSSVGGTFSRATTLSRG) are compositionally biased toward polar residues. Positions 343 to 356 (INQIFIRGENVLLV) are SM 2.

Belongs to the snRNP Sm proteins family. Component of the heptameric ring U7 snRNP complex, or U7 Sm protein core complex, at least composed of LSM10, LSM11, SNRPB, SNRPD3, SNRPE, SNRPF, SNRPG and U7 snRNA. Formation of the U7 snRNP is an ATP-dependent process mediated by a specialized SMN complex containing at least the Sm protein core complex and additionally, the U7-specific LSM10 and LSM11 proteins. Identified in a histone pre-mRNA complex, at least composed of ERI1, LSM11, SLBP, SNRPB, SYNCRIP and YBX1. Interacts (via the Sm domains) with CLNS1A. Interacts with SMN and ZNF473. Interacts with PRMT5 and WDR77.

It localises to the nucleus. Functionally, component of the U7 snRNP complex that is involved in the histone 3'-end pre-mRNA processing. Increases U7 snRNA levels but not histone 3'-end pre-mRNA processing activity, when overexpressed. Required for cell cycle progression from G1 to S phases. Binds specifically to the Sm-binding site of U7 snRNA. The sequence is that of U7 snRNA-associated Sm-like protein LSm11 from Homo sapiens (Human).